A 335-amino-acid chain; its full sequence is UPF0065 protein BB4329 (335 aa).

The signal sequence occupies residues 1–39; sequence MNKNIPAFHRRCHGLVQGLARTLLLAPVLLALSVPAAQA.

It belongs to the UPF0065 (bug) family.

It localises to the periplasm. This chain is UPF0065 protein BB4329, found in Bordetella bronchiseptica (strain ATCC BAA-588 / NCTC 13252 / RB50) (Alcaligenes bronchisepticus).